A 104-amino-acid polypeptide reads, in one-letter code: PTS system lactose-specific EIIA component (104 aa).

The PTS EIIA type-3 domain maps to 1 to 102; that stretch reads MNRDEVQLLG…MKHLIELYKK (102 aa). His-78 (tele-phosphohistidine intermediate) is an active-site residue. Phosphohistidine; by HPr is present on His-78. A Mg(2+)-binding site is contributed by Asp-81.

As to quaternary structure, homotrimer. Mg(2+) is required as a cofactor.

The protein localises to the cytoplasm. In terms of biological role, the phosphoenolpyruvate-dependent sugar phosphotransferase system (sugar PTS), a major carbohydrate active transport system, catalyzes the phosphorylation of incoming sugar substrates concomitantly with their translocation across the cell membrane. The enzyme II LacEF PTS system is involved in lactose transport. The polypeptide is PTS system lactose-specific EIIA component (Staphylococcus epidermidis (strain ATCC 35984 / DSM 28319 / BCRC 17069 / CCUG 31568 / BM 3577 / RP62A)).